The primary structure comprises 115 residues: Large ribosomal subunit protein bL19 (115 aa).

Belongs to the bacterial ribosomal protein bL19 family.

In terms of biological role, this protein is located at the 30S-50S ribosomal subunit interface and may play a role in the structure and function of the aminoacyl-tRNA binding site. This is Large ribosomal subunit protein bL19 from Buchnera aphidicola subsp. Cinara cedri (strain Cc).